We begin with the raw amino-acid sequence, 81 residues long: Cytochrome c oxidase subunit 7B2, mitochondrial (81 aa).

The transit peptide at 1–25 (MMFPLARNALSSLKIRSILQSMARQ) directs the protein to the mitochondrion. Residues 26–33 (SHVKHSPD) lie on the Mitochondrial matrix side of the membrane. A helical membrane pass occupies residues 34–60 (FHDKYGNAVLASGTAFCVVAWVFTATQ). At 61–81 (IGIEWNLSPVGRVTPKEWKHQ) the chain is on the mitochondrial intermembrane side.

It belongs to the cytochrome c oxidase VIIb family. Component of the cytochrome c oxidase (complex IV, CIV), a multisubunit enzyme composed of 14 subunits. The complex is composed of a catalytic core of 3 subunits MT-CO1, MT-CO2 and MT-CO3, encoded in the mitochondrial DNA, and 11 supernumerary subunits COX4I, COX5A, COX5B, COX6A, COX6B, COX6C, COX7A, COX7B, COX7C, COX8 and NDUFA4, which are encoded in the nuclear genome. The complex exists as a monomer or a dimer and forms supercomplexes (SCs) in the inner mitochondrial membrane with NADH-ubiquinone oxidoreductase (complex I, CI) and ubiquinol-cytochrome c oxidoreductase (cytochrome b-c1 complex, complex III, CIII), resulting in different assemblies (supercomplex SCI(1)III(2)IV(1) and megacomplex MCI(2)III(2)IV(2)).

The protein localises to the mitochondrion inner membrane. It participates in energy metabolism; oxidative phosphorylation. Component of the cytochrome c oxidase, the last enzyme in the mitochondrial electron transport chain which drives oxidative phosphorylation. The respiratory chain contains 3 multisubunit complexes succinate dehydrogenase (complex II, CII), ubiquinol-cytochrome c oxidoreductase (cytochrome b-c1 complex, complex III, CIII) and cytochrome c oxidase (complex IV, CIV), that cooperate to transfer electrons derived from NADH and succinate to molecular oxygen, creating an electrochemical gradient over the inner membrane that drives transmembrane transport and the ATP synthase. Cytochrome c oxidase is the component of the respiratory chain that catalyzes the reduction of oxygen to water. Electrons originating from reduced cytochrome c in the intermembrane space (IMS) are transferred via the dinuclear copper A center (CU(A)) of subunit 2 and heme A of subunit 1 to the active site in subunit 1, a binuclear center (BNC) formed by heme A3 and copper B (CU(B)). The BNC reduces molecular oxygen to 2 water molecules using 4 electrons from cytochrome c in the IMS and 4 protons from the mitochondrial matrix. The protein is Cytochrome c oxidase subunit 7B2, mitochondrial (COX7B2) of Macaca fascicularis (Crab-eating macaque).